A 909-amino-acid polypeptide reads, in one-letter code: MKRRVIKMATRASDMHLLNVPLSQPHFFDPHSAWLRHGPFGMWLVHALRPRRIVELGTHYGFSYFCFCQAVAAGDLATECFAVDTWQGDEHAGFYGEEIYHRVMAHNQQYVRFSRLLRKTFTEALDDIEDSSVDLLHVDGRHFYHDVKADFENWIPKLSPRSVVLFHDTEVREHGFGVWQYWAELAAIRPSLNFPYQHGLGMLFWGKEIAEGLAPLARTLTDTERLNWPVEYFALAGESYVRDATQRGVIKRLELAEATIEERKAETVLVQQKLQEARRRPLKQLKRKLVFNMLRAAAKASPPLPSRTAERFRRSAAKRDPMRDDLQTLSGQGFMTYEAVVRGWGKQRQALAGRLSELVRRLQNGPLISVVVPVYNPDPALLVEMIESVRAQSYANWELCLADDCSTDPEVGRVLRNYAAQDPRVRVVFREANGHMSQASNSAIEIARGAYIALLDHDDLLDPDALVLVVQVIDAHPDAKIIYTDEDKIVEGGTRCDAHFKPDWNRDLLYGINYISHLGVFDAALVREVGAFREGFEGAQDYDMLLRCIERVQDRQIHHIAKVLYSWRATPGSAAASNRAKPYANEAGRRALEEHLARTTGKSIPVVLGPIPFSYRALWPMEGTPLVSIIIPTRDHLNVLRATVESILGRTMYGNFELIVVDNGSVEADTLEWFGQIEGSDRRVRVLRDARPFNYSALNNAAVAQSRGEIVALVNDDVEVIAPDWLSEMVALAQRPGVGCVGAKLYYPDGRIQHAGVVIGLGGVAGHGHLLYPGEHAGYFCRLKLRQNYSAVTAACLVIKREIFDAVGGLNESELTVAFSDIDLCLKVRAAGYNNVWTPWAELYHHESASRGHEDTPEKRARFRREVDYMKRRWKTHDFADPAYNPNLALERNDFVLSSPRWCISTKLT.

This is an uncharacterized protein from Sinorhizobium fredii (strain NBRC 101917 / NGR234).